Consider the following 590-residue polypeptide: L-erythrulose kinase (590 aa).

The 325-residue stretch at 7–331 folds into the DhaK domain; it reads QPSSFARELT…WRAPADAPAF (325 aa). His-217 (tele-hemiaminal-histidine intermediate) is an active-site residue. Residues 366 to 568 form the DhaL domain; the sequence is HCVAAALNAA…LAMILDAVSA (203 aa). Residues 398 to 401, 441 to 442, Gly-483, Arg-540, and 553 to 555 each bind ADP; these read HGIG, TS, and DAG.

It catalyses the reaction L-erythrulose + ATP = L-erythrulose 1-phosphate + ADP + H(+). It functions in the pathway carbohydrate metabolism. Functionally, involved in catabolism of D-apiose. Catalyzes the phosphorylation of L-erythrulose to L-erythrulose 1-phosphate. Can also phosphorylate D-erythrulose and dihydroxyacetone in vitro. The sequence is that of L-erythrulose kinase from Pectobacterium atrosepticum (strain SCRI 1043 / ATCC BAA-672) (Erwinia carotovora subsp. atroseptica).